The primary structure comprises 467 residues: Neutrophil collagenase (467 aa).

Residues 1 to 20 form the signal peptide; sequence MFSLKTLPFLLLLHVQISKA. Positions 21-100 are cleaved as a propeptide — activation peptide; it reads FPVSSKEKNT…CGVPDSGGFM (80 aa). Residues asparagine 54 and asparagine 73 are each glycosylated (N-linked (GlcNAc...) asparagine). Residues 89–96 carry the Cysteine switch motif; sequence PRCGVPDS. Cysteine 91 provides a ligand contact to Zn(2+). Asparagine 112 carries N-linked (GlcNAc...) asparagine glycosylation. Aspartate 157 contacts Ca(2+). Residues histidine 167 and aspartate 169 each coordinate Zn(2+). Residues aspartate 174, glycine 175, asparagine 177, and isoleucine 179 each coordinate Ca(2+). Histidine 182 contacts Zn(2+). 3 residues coordinate Ca(2+): glycine 189, glycine 191, and aspartate 193. Histidine 195 is a binding site for Zn(2+). Residues aspartate 197 and glutamate 200 each contribute to the Ca(2+) site. Asparagine 204 carries an N-linked (GlcNAc...) asparagine glycan. Histidine 217 provides a ligand contact to Zn(2+). The active site involves glutamate 218. Histidine 221 and histidine 227 together coordinate Zn(2+). Asparagine 246 carries N-linked (GlcNAc...) asparagine glycosylation. Hemopexin repeat units lie at residues 276 to 325, 326 to 372, 374 to 420, and 421 to 464; these read PKPC…WPSL, PTGI…GFPS, VQAI…FPGI, and ESKV…WLNC. Cysteine 279 and cysteine 464 form a disulfide bridge. Residue aspartate 286 participates in Ca(2+) binding. Positions 378 and 425 each coordinate Ca(2+).

Belongs to the peptidase M10A family. The cofactor is Ca(2+). Zn(2+) serves as cofactor. In terms of tissue distribution, neutrophils.

The protein localises to the cytoplasmic granule. It is found in the secreted. The protein resides in the extracellular space. Its subcellular location is the extracellular matrix. It carries out the reaction Cleavage of interstitial collagens in the triple helical domain. Unlike EC 3.4.24.7, this enzyme cleaves type III collagen more slowly than type I.. Its activity is regulated as follows. Cannot be activated without removal of the activation peptide. In terms of biological role, can degrade fibrillar type I, II, and III collagens. This chain is Neutrophil collagenase (MMP8), found in Homo sapiens (Human).